We begin with the raw amino-acid sequence, 137 residues long: Proofreading thioesterase EntH (137 aa).

Catalysis depends on Glu63, which acts as the Nucleophile or proton acceptor.

It belongs to the thioesterase PaaI family. As to quaternary structure, homotetramer. Dimer of dimers. Interacts specifically with the aryl carrier protein (ArCP) domain of EntB.

It is found in the cytoplasm. It functions in the pathway siderophore biosynthesis; enterobactin biosynthesis. Its function is as follows. Required for optimal enterobactin synthesis. Acts as a proofreading enzyme that prevents EntB misacylation by hydrolyzing the thioester bound existing between EntB and wrongly charged molecules. The polypeptide is Proofreading thioesterase EntH (Escherichia coli O157:H7 (strain EC4115 / EHEC)).